The primary structure comprises 421 residues: EGFR adapter protein (421 aa).

4 disordered regions span residues 18 to 94, 109 to 154, 173 to 194, and 372 to 396; these read TFIS…PQLQ, DVQE…RLVD, EDSR…SGCG, and PVPL…AGGT. Positions 21-30 are enriched in low complexity; sequence SSSSASSSSS. The span at 62–89 shows a compositional bias: basic residues; the sequence is FFHHHHPPAHPHPPRQQPHPHSHSHPHP. Over residues 109 to 120 the composition is skewed to basic and acidic residues; it reads DVQELSGQEHPH. A compositionally biased stretch (low complexity) spans 181-194; the sequence is STCGSSLTSGSGCG. The 94-residue stretch at 286–379 folds into the SH2 domain; that stretch reads WFQAGIPREI…LLPVPLTLPR (94 aa).

May interact (via SH2 domain) with Egfr (when phosphorylated). Detected along the wing margin, with high levels of expression in two stripes of cells on either side of the dorsal/ventral boundary and lower levels of expression in a small region at the anteroposterior boundary (at protein level). High levels of expression along two parallel stripes of cells on either side of the wing pouch dorsal/ventral boundary, and slightly lower levels of expression in a region either side of the anteroposterior boundary. Also expressed in discrete regions of the wing imaginal disk outside of the pouch. Expressed in eye imaginal disk photoreceptors with highest levels of expression in R7 photoreceptor cells.

In terms of biological role, involved in the negative regulation of the Egfr/Ras signaling pathway. During wing morphogenesis, may function redundantly with PVRAP to inhibit Egfr activity and prevent uncontrolled cell growth. The sequence is that of EGFR adapter protein from Drosophila melanogaster (Fruit fly).